Reading from the N-terminus, the 351-residue chain is 1-acylglycerol-3-phosphate O-acyltransferase ABHD5 (351 aa).

The 106-residue stretch at 79 to 184 folds into the AB hydrolase-1 domain; it reads PLVLLHGFGG…LILVEPWGFP (106 aa). The residue at position 124 (Ser124) is a Phosphoserine. Positions 329–334 match the HXXXXD motif motif; it reads HYVYAD.

It belongs to the peptidase S33 family. ABHD4/ABHD5 subfamily. In terms of assembly, interacts with ADRP and PLIN. Interacts with PNPLA2. Interacts with PLIN5; promotes interaction with PNPLA2.

It is found in the cytoplasm. Its subcellular location is the lipid droplet. It catalyses the reaction a 1-acyl-sn-glycero-3-phosphate + an acyl-CoA = a 1,2-diacyl-sn-glycero-3-phosphate + CoA. It carries out the reaction 1-(9Z-octadecenoyl)-sn-glycero-3-phosphate + (9Z)-octadecenoyl-CoA = 1,2-di-(9Z-octadecenoyl)-sn-glycero-3-phosphate + CoA. The enzyme catalyses 1-(9Z-octadecenoyl)-sn-glycero-3-phosphate + hexadecanoyl-CoA = 1-(9Z)-octadecenoyl-2-hexadecanoyl-sn-glycero-3-phosphate + CoA. The catalysed reaction is 1-(9Z-octadecenoyl)-sn-glycero-3-phosphate + octadecanoyl-CoA = 1-(9Z-octadecenoyl)-2-octadecanoyl-sn-glycero-3-phosphate + CoA. It catalyses the reaction 1-(9Z-octadecenoyl)-sn-glycero-3-phosphate + (5Z,8Z,11Z,14Z)-eicosatetraenoyl-CoA = 1-(9Z)-octadecenoyl-2-(5Z,8Z,11Z,14Z)-eicosatetraenoyl-sn-glycero-3-phosphate + CoA. It carries out the reaction eicosanoyl-CoA + 1-(9Z-octadecenoyl)-sn-glycero-3-phosphate = 1-(9Z)-octadecenoyl-2-eicosanoyl-sn-glycero-3-phosphate + CoA. The enzyme catalyses 1-hexadecanoyl-sn-glycero-3-phosphate + (9Z)-octadecenoyl-CoA = 1-hexadecanoyl-2-(9Z-octadecenoyl)-sn-glycero-3-phosphate + CoA. The catalysed reaction is 1-octadecanoyl-sn-glycero-3-phosphate + (9Z)-octadecenoyl-CoA = 1-octadecanoyl-2-(9Z-octadecenoyl)-sn-glycero-3-phosphate + CoA. It catalyses the reaction 1-(5Z,8Z,11Z,14Z-eicosatetraenoyl)-sn-glycero-3-phosphate + (9Z)-octadecenoyl-CoA = 1-(5Z,8Z,11Z,14Z)-eicosatetraenoyl-2-(9Z)-octadecenoyl-sn-glycero-3-phosphate + CoA. With respect to regulation, acyltransferase activity is inhibited by detergents such as Triton X-100 and 3-[(3-cholamidopropyl)dimethylammonio]-1-propanesulfonate (CHAPS). Acyltransferase activity is inhibited by the presence of magnesium and calcium. In terms of biological role, coenzyme A-dependent lysophosphatidic acid acyltransferase that catalyzes the transfer of an acyl group on a lysophosphatidic acid. Functions preferentially with 1-oleoyl-lysophosphatidic acid followed by 1-palmitoyl-lysophosphatidic acid, 1-stearoyl-lysophosphatidic acid and 1-arachidonoyl-lysophosphatidic acid as lipid acceptor. Functions preferentially with arachidonoyl-CoA followed by oleoyl-CoA as acyl group donors. Functions in phosphatidic acid biosynthesis. May regulate the cellular storage of triacylglycerol through activation of the phospholipase PNPLA2. Involved in keratinocyte differentiation. Regulates lipid droplet fusion. The polypeptide is 1-acylglycerol-3-phosphate O-acyltransferase ABHD5 (Rattus norvegicus (Rat)).